A 464-amino-acid polypeptide reads, in one-letter code: Lysosomal dipeptide transporter MFSD1 (464 aa).

Residues 11-12 carry the Dileucine internalization motif motif; it reads LL. At Ser20 the chain carries Phosphoserine. 12 consecutive transmembrane segments (helical) span residues 38 to 58, 82 to 102, 112 to 132, 134 to 154, 190 to 210, 214 to 234, 265 to 285, 303 to 323, 330 to 350, 360 to 380, 391 to 411, and 417 to 437; these read LAHRLVVLSLMCFLGFGSYFC, LLYAWYSWPNVVLCFLGGFLI, TVIFSCFVCIGQVIFALGGIF, AFWLMELGRFVFGIGGESLAV, LMGWLYGKIEALLGSAGHMTL, LMIGCITCIFSLICALALAYL, LILVFVICVCYYVAVFPFIGL, AINSIVYIISAPMSPLFGLLV, IIWVLYAVAATLVSHMMLAFT, LLGFSYSLLACALWPMVAFIV, FMQSIQNLGLAVIAILAGMIL, and LLLEVFFIACVSLSLLAVVCL.

It belongs to the major facilitator superfamily. As to quaternary structure, homodimer. Interacts with lysosomal protein GLMP (via lumenal domain); the interaction starts while both proteins are still in the endoplasmic reticulum and is required for stabilization of MFSD1 in lysosomes but has no direct effect on its targeting to lysosomes or transporter activity. Not N-glycosylated. In brain, expressed in the cortex, striatum hippocampus, hypothalamus, thalamus and brainstem (at protein level). Widely expressed with highest levels in kidney and spleen (at protein level).

Its subcellular location is the lysosome membrane. The enzyme catalyses L-alpha-aminoacyl-L-arginine(out) = L-alpha-aminoacyl-L-arginine(in). The catalysed reaction is L-arginyl-L-alpha-amino acid(out) = L-arginyl-L-alpha-amino acid(in). It carries out the reaction L-arginyl-glycine(out) = L-arginyl-glycine(in). It catalyses the reaction L-alpha-aminoacyl-L-lysine(out) = L-alpha-aminoacyl-L-lysine(in). The enzyme catalyses L-aspartyl-L-lysine(out) = L-aspartyl-L-lysine(in). The catalysed reaction is L-alanyl-L-lysine(out) = L-alanyl-L-lysine(in). It carries out the reaction L-lysyl-L-alpha-amino acid(out) = L-lysyl-L-alpha-amino acid(in). It catalyses the reaction L-lysyl-L-alanine(out) = L-lysyl-L-alanine(in). The enzyme catalyses L-lysyl-L-lysine(out) = L-lysyl-L-lysine(in). The catalysed reaction is L-lysyl-glycine(out) = L-lysyl-glycine(in). It carries out the reaction L-alpha-aminoacyl-L-histidine(out) = L-alpha-aminoacyl-L-histidine(in). It catalyses the reaction L-histidyl-L-alpha-amino acid(out) = L-histidyl-L-alpha-amino acid(in). The enzyme catalyses L-histidyl-glycine(out) = L-histidyl-glycine(in). In terms of biological role, lysosomal dipeptide uniporter that selectively exports lysine, arginine or histidine-containing dipeptides with a net positive charge from the lysosome lumen into the cytosol. Could play a role in a specific type of protein O-glycosylation indirectly regulating macrophages migration and tissue invasion. Also essential for liver homeostasis. This chain is Lysosomal dipeptide transporter MFSD1, found in Mus musculus (Mouse).